Consider the following 429-residue polypeptide: MANVAVVGAQWGDEGKGKVVDWLSERADVVVRFQGGHNAGHTLVINGVTYKLSLLPSGVVRGKLSIIGNGVVIDPWALLAEIERIRAQGVEITPEVLKIAENACLILPLHAHLDKAREEASGTAKIGTTGRGIGPAYEDRVGRRAIRVCDLADEAVLKAKIATLLRHHNALLRGLGAAEVDGAELLAKLLDVAPKILPFADVVWQHLDEVRHTRKRVLFEGAQGAMLDVDHGTYPYVTSSNTVSGNAGTGSGVGPGQVGYVLGICKAYTTRVGEGPFPTELFDEIGKSIGERGHEFGTVTGRPRRCGWFDAVMVRQAVKVGGITGIALTKLDVLDGFKELKICTGYKLDGKVINHFPASMTGQANVEPIYEVIEGWSQSTRGVRSWKDLPATAIKYIRRIEELIEAPVALLSTSPEREDSILVHDPFAT.

GTP is bound by residues 12 to 18 and 40 to 42; these read GDEGKGK and GHT. The active-site Proton acceptor is aspartate 13. The Mg(2+) site is built by aspartate 13 and glycine 40. IMP is bound by residues 13–16, 38–41, threonine 129, arginine 143, glutamine 223, threonine 238, and arginine 302; these read DEGK and NAGH. Histidine 41 serves as the catalytic Proton donor. Residue 298-304 participates in substrate binding; it reads TVTGRPR. GTP contacts are provided by residues arginine 304, 330-332, and 412-414; these read KLD and STS.

The protein belongs to the adenylosuccinate synthetase family. In terms of assembly, homodimer. Mg(2+) is required as a cofactor.

The protein localises to the cytoplasm. The enzyme catalyses IMP + L-aspartate + GTP = N(6)-(1,2-dicarboxyethyl)-AMP + GDP + phosphate + 2 H(+). The protein operates within purine metabolism; AMP biosynthesis via de novo pathway; AMP from IMP: step 1/2. In terms of biological role, plays an important role in the de novo pathway of purine nucleotide biosynthesis. Catalyzes the first committed step in the biosynthesis of AMP from IMP. The chain is Adenylosuccinate synthetase from Paramagnetospirillum magneticum (strain ATCC 700264 / AMB-1) (Magnetospirillum magneticum).